We begin with the raw amino-acid sequence, 425 residues long: Endoplasmic reticulum junction formation protein lunapark (425 aa).

Residue Gly2 is the site of N-myristoyl glycine attachment. Over 2–45 (GGLFSRWRAKPSTVEVLENIDKEIQALEEFREKNQRLQKLWVGR) the chain is Cytoplasmic. Residues 15-41 (VEVLENIDKEIQALEEFREKNQRLQKL) are a coiled coil. The helical transmembrane segment at 46-66 (LIIYSSILYLFTCLIVYLWYL) threads the bilayer. The Lumenal portion of the chain corresponds to 67 to 77 (PDEFTARLVMT). A helical membrane pass occupies residues 78 to 98 (LPFFAFPLIIWTLRTVLIFFF). Topologically, residues 99–425 (SKRTERNNEA…EPSEESLVTK (327 aa)) are cytoplasmic. A coiled-coil region spans residues 101-128 (RTERNNEALDDLKSQKKKILEEVMEKET). Phosphoserine occurs at positions 114, 153, 177, 182, and 194. Residues 144–242 (KKAKEFEPPS…HPPGPPLARP (99 aa)) form a disordered region. Over residues 186 to 195 (GPPPQGPVSP) the composition is skewed to pro residues. A Phosphothreonine modification is found at Thr211. Phosphoserine is present on Ser222. A C4-type; plays a role in ER morphology zinc finger spans residues 271-296 (CQQCFSHNGMALKEEFEYIAFRCAYC). 3 positions are modified to phosphoserine: Ser316, Ser348, and Ser380. The disordered stretch occupies residues 320 to 425 (RQAVEGSSST…EPSEESLVTK (106 aa)). Residues 384 to 398 (EPAENQEETENEETS) show a composition bias toward acidic residues. Ser411 carries the phosphoserine modification.

The protein belongs to the lunapark family. In terms of assembly, homodimer; homodimerization requires the C4-type zinc finger motif and decreases during mitosis in a phosphorylation-dependent manner. In terms of processing, myristoylated; myristoylation is necessary for the endoplasmic reticulum (ER) three-way ER tubular junction formation, but is not required neither for membrane translocation, membrane topology formation, nor for the specific localization to ER membranes. Post-translationally, phosphorylated. Phosphorylation occurs at Ser-177, Ser-182, Ser-222, Ser-316 and Ser-380 during interphase. Phosphorylation occurs at Ser-114, Ser-153, Ser-194, Thr-211 and Ser-348 during mitosis; these phosphorylations reduce both its homodimerization and the ER three-way tubular junction formation. Subject to proteasomal degradation following phosphorylation during mitosis. As to expression, expressed in most tissues at basal level, with reinforcement in distal limb buds, genital bud, and in parts of the central nervous system.

The protein localises to the endoplasmic reticulum membrane. Functionally, endoplasmic reticulum (ER)-shaping membrane protein that plays a role in determining ER morphology. Involved in the stabilization of nascent three-way ER tubular junctions within the ER network. May also play a role as a curvature-stabilizing protein within three-way ER tubular junction network. May be involved in limb and central nervous system development. This Mus musculus (Mouse) protein is Endoplasmic reticulum junction formation protein lunapark.